The sequence spans 381 residues: cAMP-dependent protein kinase type I-alpha regulatory subunit (381 aa).

At M1 the chain carries N-acetylmethionine. Residues 1–135 (MESGSTAASE…AALAKAIEKN (135 aa)) form a dimerization and phosphorylation region. S3 bears the Phosphoserine mark. The disordered stretch occupies residues 64 to 96 (QIQNLQKAGTRTDSREDEISPPPPNPVVKGRRR). Phosphothreonine is present on T75. A phosphoserine mark is found at S77 and S83. A Pseudophosphorylation motif motif is present at residues 96-100 (RRGAI). S101 carries the post-translational modification Phosphoserine. Residues 137-254 (LFSH…SKVS), E202, R211, 255-381 (ILES…SLSV), E326, and R335 each bind 3',5'-cyclic AMP. S258 is modified (phosphoserine).

Belongs to the cAMP-dependent kinase regulatory chain family. The inactive holoenzyme is composed of two regulatory chains and two catalytic chains. Activation by cAMP releases the two active catalytic monomers and the regulatory dimer. Interacts with PRKACA and PRKACB. PRKAR1A also interacts with RFC2; the complex may be involved in cell survival. Interacts with AKAP4. Interacts with RARA; the interaction occurs in the presence of cAMP or FSH and regulates RARA transcriptional activity. Interacts with the phosphorylated form of PJA2. Interacts with CBFA2T3. Interacts with PRKX; regulates this cAMP-dependent protein kinase. Interacts with smAKAP; this interaction may target PRKAR1A to the plasma membrane. Interacts with AICDA. In terms of processing, the pseudophosphorylation site binds to the substrate-binding region of the catalytic chain, resulting in the inhibition of its activity.

The protein resides in the cell membrane. Regulatory subunit of the cAMP-dependent protein kinases involved in cAMP signaling in cells. This is cAMP-dependent protein kinase type I-alpha regulatory subunit (PRKAR1A) from Pongo abelii (Sumatran orangutan).